The chain runs to 3726 residues: Histone-lysine N-methyltransferase trithorax (3726 aa).

4 disordered regions span residues 1-247, 321-352, 371-429, and 509-624; these read MGRS…ATTS, QLNS…GVGG, NEVA…TAKQ, and AGAS…RSTR. 2 stretches are compositionally biased toward low complexity: residues 31–53 and 71–101; these read PAEP…GSSA and GGAS…STGS. The span at 102–115 shows a compositional bias: gly residues; that stretch reads GSSGSGSTNGGSVN. Basic and acidic residues predominate over residues 126 to 143; the sequence is LDKEAVTKDQNGDGDKTR. Positions 147–205 are enriched in low complexity; sequence SSAPSGKLSAAASGKALSKSSRTFSASTSVTSSGRSSGSSPDGNSGASSDGASSGISCG. Residues 206 to 215 show a composition bias toward polar residues; that stretch reads KSTAKSTEAS. The segment covering 222 to 247 has biased composition (low complexity); sequence TTGAGTCSSAKSSKASSGTTSEATTS. Composition is skewed to low complexity over residues 384 to 402 and 509 to 525; these read AAAN…GPPA and AGAS…SSSN. The segment covering 553–586 has biased composition (acidic residues); the sequence is PEDQNNAEDDEMDDDDDDEEAEEDDENEDDNDEA. Positions 587–610 are enriched in basic and acidic residues; that stretch reads VSEKSAETEKSAGADERDPDEKQL. Positions 759–884 form a DNA-binding region, nuclear receptor; sequence PSACSICSAV…PGMRGEAAAR (126 aa). Disordered stretches follow at residues 915–937, 981–1049, 1115–1184, and 1208–1231; these read TSVK…PNPL, LTKK…SHGV, VPSA…SSAK, and DIAT…KEHR. The span at 918-937 shows a compositional bias: polar residues; the sequence is KWKSSGDSTSALTSIKPNPL. Positions 986–1000 are enriched in basic and acidic residues; that stretch reads SKQEKEKVKESEQSE. Low complexity predominate over residues 1031–1041; it reads PQTSTTTQPSA. Residues 1123–1132 are compositionally biased toward basic and acidic residues; it reads SPEKPTHIVT. 2 stretches are compositionally biased toward low complexity: residues 1173-1183 and 1211-1223; these read GTASAAGGSSA and TSSS…NQTQ. 3 PHD-type zinc fingers span residues 1266–1347, 1348–1393, and 1421–1482; these read RALC…CTVC, YTCN…CLKC, and GNFC…CARR. In terms of domain architecture, Bromo spans 1496 to 1663; that stretch reads AVMEEFKASL…SEQFPWFQNE (168 aa). The disordered stretch occupies residues 1573 to 1592; the sequence is FKDQQQQQQQRNANMNKPRV. A C2HC pre-PHD-type zinc finger spans residues 1734-1774; the sequence is TRMCLFCRKSGEGLSGEEARLLYCGHDCWVHTNCAMWSAEV. The PHD-type 4 zinc finger occupies 1795–1842; that stretch reads IKCTVCGNRGATVGCNVRSCGEHYHYPCARSIDCAFLTDKSMYCPAHA. The region spanning 1884-1941 is the FYR N-terminal domain; that stretch reads RVQFHIGSLEVRQLGAIVPRFSDSYEAVVPINFLCSRLYWSSKEPWKIVEYTVRTTIQ. 7 disordered regions span residues 1991-2019, 2068-2110, 2283-2302, 2649-2669, 2866-2894, 3029-3096, and 3347-3381; these read GGTD…PQQQ, TQAM…WPAS, CSPT…QGMT, GGGA…LGGT, SNLK…IASK, QHFS…PTPP, and RKEE…IQEP. The span at 2074–2087 shows a compositional bias: low complexity; it reads NQAQNQNQQAGGAN. Residues 3032–3043 are compositionally biased toward low complexity; it reads STSSSSSSSNCS. A compositionally biased stretch (polar residues) spans 3044–3057; the sequence is LPTNVVNPMQQQAP. An FYR C-terminal domain is found at 3386–3470; sequence GPHLLYEIQS…EKCSKYTPKY (85 aa). The 117-residue stretch at 3588–3704 folds into the SET domain; sequence DYVGVFRSHI…QGEELTYDYK (117 aa). Positions 3598 and 3600 each coordinate S-adenosyl-L-methionine. Residue Cys3641 is modified to S-methylcysteine; by autocatalysis. S-adenosyl-L-methionine contacts are provided by residues Tyr3642 and 3665-3666; that span reads NH. The Zn(2+) site is built by Cys3668, Cys3714, Cys3716, and Cys3721. The 17-residue stretch at 3710–3726 folds into the Post-SET domain; sequence EKIPCSCGSKRCRKYLN.

Belongs to the class V-like SAM-binding methyltransferase superfamily. Histone-lysine methyltransferase family. TRX/MLL subfamily. Interacts (via SET domain) with ash1 (via SET domain). Interacts with Nup98. As to expression, maternal isoforms are expressed in syncytial blastoderm, confined to the ventral region fated to become mesoderm. An additional broad domain of expression arises during cellularization and is quickly resolved into four pair-rule-like stripes in the posterior half of the embryo.

Its subcellular location is the nucleus. It localises to the chromosome. The enzyme catalyses L-lysyl(9)-[histone H3] + 3 S-adenosyl-L-methionine = N(6),N(6),N(6)-trimethyl-L-lysyl(9)-[histone H3] + 3 S-adenosyl-L-homocysteine + 3 H(+). The catalysed reaction is L-cysteinyl-[protein] + S-adenosyl-L-methionine = S-methyl-L-cysteinyl-[protein] + S-adenosyl-L-homocysteine + H(+). Functionally, histone methyltransferase that methylates 'Lys-4' of histone H3 (H3K4me). H3K4me represents a specific tag for epigenetic transcriptional activation. Functions in segment determination through interaction with genes of bithorax (BX-C) and antennapedia (ANT-C) complexes. Acts as an activator of BX-C. Involved in the very early regulation of homeotic genes expressed only in the posterior region of the embryo. Also has auto-methylation activity on Cys-3641. In Drosophila melanogaster (Fruit fly), this protein is Histone-lysine N-methyltransferase trithorax.